A 306-amino-acid chain; its full sequence is uncharacterized protein (306 aa).

This is an uncharacterized protein from Treponema pallidum (strain Nichols).